A 96-amino-acid polypeptide reads, in one-letter code: Small ribosomal subunit protein bS6 (96 aa).

It belongs to the bacterial ribosomal protein bS6 family.

Functionally, binds together with bS18 to 16S ribosomal RNA. The polypeptide is Small ribosomal subunit protein bS6 (Streptococcus suis (strain 98HAH33)).